We begin with the raw amino-acid sequence, 615 residues long: Medium-chain acyl-CoA ligase ACSF2, mitochondrial (615 aa).

The N-terminal 41 residues, 1-41, are a transit peptide targeting the mitochondrion; that stretch reads MAVYHGMLRFGRLCIASLGARGPRTLLSRPRPNSKLQSVRA. Lys179 is subject to N6-acetyllysine. Lys182 bears the N6-acetyllysine; alternate mark. Lys182 is subject to N6-succinyllysine; alternate. At Lys199 the chain carries N6-acetyllysine. An ATP-binding site is contributed by 263–271; that stretch reads TSGTTGNPK. N6-acetyllysine occurs at positions 340 and 398. Lys478 carries the post-translational modification N6-succinyllysine. Residues Asp493 and Arg508 each coordinate ATP. Lys510 bears the N6-acetyllysine mark. N6-acetyllysine; alternate is present on residues Lys544 and Lys570. N6-succinyllysine; alternate is present on residues Lys544 and Lys570. ATP is bound at residue Lys599. The residue at position 599 (Lys599) is an N6-succinyllysine.

The protein belongs to the ATP-dependent AMP-binding enzyme family.

The protein resides in the mitochondrion. The catalysed reaction is a medium-chain fatty acid + ATP + CoA = a medium-chain fatty acyl-CoA + AMP + diphosphate. It catalyses the reaction octanoate + ATP + CoA = octanoyl-CoA + AMP + diphosphate. Acyl-CoA synthases catalyze the initial reaction in fatty acid metabolism, by forming a thioester with CoA. Has some preference toward medium-chain substrates. Plays a role in adipocyte differentiation. In Mus musculus (Mouse), this protein is Medium-chain acyl-CoA ligase ACSF2, mitochondrial.